The chain runs to 250 residues: Ribosomal RNA small subunit methyltransferase J (250 aa).

S-adenosyl-L-methionine-binding positions include 96–97 (RD) and aspartate 168.

Belongs to the methyltransferase superfamily. RsmJ family.

It is found in the cytoplasm. The catalysed reaction is guanosine(1516) in 16S rRNA + S-adenosyl-L-methionine = N(2)-methylguanosine(1516) in 16S rRNA + S-adenosyl-L-homocysteine + H(+). In terms of biological role, specifically methylates the guanosine in position 1516 of 16S rRNA. This chain is Ribosomal RNA small subunit methyltransferase J, found in Neisseria meningitidis serogroup C (strain 053442).